A 439-amino-acid chain; its full sequence is Tol-Pal system protein TolB (439 aa).

An N-terminal signal peptide occupies residues 1 to 22; the sequence is MKKPLRWLAALTALLLPLSALA.

Belongs to the TolB family. The Tol-Pal system is composed of five core proteins: the inner membrane proteins TolA, TolQ and TolR, the periplasmic protein TolB and the outer membrane protein Pal. They form a network linking the inner and outer membranes and the peptidoglycan layer.

It localises to the periplasm. In terms of biological role, part of the Tol-Pal system, which plays a role in outer membrane invagination during cell division and is important for maintaining outer membrane integrity. The chain is Tol-Pal system protein TolB from Xanthomonas axonopodis pv. citri (strain 306).